Consider the following 172-residue polypeptide: Ribosome maturation factor RimP (172 aa).

The protein belongs to the RimP family.

The protein localises to the cytoplasm. Required for maturation of 30S ribosomal subunits. In Chlorobium phaeovibrioides (strain DSM 265 / 1930) (Prosthecochloris vibrioformis (strain DSM 265)), this protein is Ribosome maturation factor RimP.